A 342-amino-acid chain; its full sequence is MTDRYILAVESSCDETSVAILKNESTLLSNVIASQVESHKRFGGVVPEVASRHHVEVITTCFEDALQEAGISASDLSAVAVTYGPGLVGALLVGLAAAKAFAWANHLPLIPVNHMAGHLMAAREQEPLVYPLIALLVSGGHTELVYVPEPGDYHIIGETRDDAVGEAYDKVGRVMGLTYPAGREIDQLAHKGQDTYHFPRAMITEDHLEFSFSGLKSAFINVHHNAKQKGDELILEDLCASFQAAVLDILLAKTKKALSRYPAKMLVVAGGVAANQGLRDRLAQEITHIEVVIPKLRLCGDNAGMIALAAAIEYDKQHFANMSLNAKPSLAFDQFPDSFVIN.

Positions 114 and 118 each coordinate Fe cation. Substrate is bound by residues 136–140, Asp-169, Gly-182, Asp-186, and Asn-275; that span reads LVSGG. Asp-301 lines the Fe cation pocket.

It belongs to the KAE1 / TsaD family. Fe(2+) serves as cofactor.

It localises to the cytoplasm. The catalysed reaction is L-threonylcarbamoyladenylate + adenosine(37) in tRNA = N(6)-L-threonylcarbamoyladenosine(37) in tRNA + AMP + H(+). Functionally, required for the formation of a threonylcarbamoyl group on adenosine at position 37 (t(6)A37) in tRNAs that read codons beginning with adenine. Is involved in the transfer of the threonylcarbamoyl moiety of threonylcarbamoyl-AMP (TC-AMP) to the N6 group of A37, together with TsaE and TsaB. TsaD likely plays a direct catalytic role in this reaction. The polypeptide is tRNA N6-adenosine threonylcarbamoyltransferase (Streptococcus pyogenes serotype M18 (strain MGAS8232)).